The following is a 262-amino-acid chain: 3-methyl-2-oxobutanoate hydroxymethyltransferase (262 aa).

Mg(2+) contacts are provided by Asp44 and Asp83. 3-methyl-2-oxobutanoate is bound by residues 44–45 (DS), Asp83, and Lys112. Glu114 is a Mg(2+) binding site. The active-site Proton acceptor is the Glu180.

Belongs to the PanB family. As to quaternary structure, homodecamer; pentamer of dimers. It depends on Mg(2+) as a cofactor.

It localises to the cytoplasm. The enzyme catalyses 3-methyl-2-oxobutanoate + (6R)-5,10-methylene-5,6,7,8-tetrahydrofolate + H2O = 2-dehydropantoate + (6S)-5,6,7,8-tetrahydrofolate. Its pathway is cofactor biosynthesis; (R)-pantothenate biosynthesis; (R)-pantoate from 3-methyl-2-oxobutanoate: step 1/2. In terms of biological role, catalyzes the reversible reaction in which hydroxymethyl group from 5,10-methylenetetrahydrofolate is transferred onto alpha-ketoisovalerate to form ketopantoate. In Chromobacterium violaceum (strain ATCC 12472 / DSM 30191 / JCM 1249 / CCUG 213 / NBRC 12614 / NCIMB 9131 / NCTC 9757 / MK), this protein is 3-methyl-2-oxobutanoate hydroxymethyltransferase.